We begin with the raw amino-acid sequence, 365 residues long: Probable L-tyrosine/L-aspartate decarboxylase (365 aa).

At K224 the chain carries N6-(pyridoxal phosphate)lysine.

The protein belongs to the group II decarboxylase family. MfnA subfamily. Pyridoxal 5'-phosphate is required as a cofactor.

It carries out the reaction L-tyrosine + H(+) = tyramine + CO2. It catalyses the reaction L-aspartate + H(+) = beta-alanine + CO2. It functions in the pathway cofactor biosynthesis; methanofuran biosynthesis. Its pathway is cofactor biosynthesis; coenzyme A biosynthesis. Functionally, catalyzes the decarboxylation of L-tyrosine to produce tyramine for methanofuran biosynthesis. Can also catalyze the decarboxylation of L-aspartate to produce beta-alanine for coenzyme A (CoA) biosynthesis. The polypeptide is Probable L-tyrosine/L-aspartate decarboxylase (Methanoregula boonei (strain DSM 21154 / JCM 14090 / 6A8)).